The primary structure comprises 121 residues: Large ribosomal subunit protein bL19 (121 aa).

It belongs to the bacterial ribosomal protein bL19 family.

Its function is as follows. This protein is located at the 30S-50S ribosomal subunit interface and may play a role in the structure and function of the aminoacyl-tRNA binding site. In Acidothermus cellulolyticus (strain ATCC 43068 / DSM 8971 / 11B), this protein is Large ribosomal subunit protein bL19.